A 1173-amino-acid polypeptide reads, in one-letter code: Eukaryotic translation initiation factor 3 subunit A (1173 aa).

The region spanning 319-502 (LQRMAAHVLL…NSIYFGTDLT (184 aa)) is the PCI domain. 2 disordered regions span residues 589–613 (QNNA…LAEQ) and 836–1173 (AAEA…PVQL). Basic and acidic residues-rich tracts occupy residues 836-900 (AAEA…RGGD), 925-1011 (DRNE…EPDS), 1028-1081 (SRDD…DAAP), and 1090-1125 (DAPR…RAPK). Positions 1128–1142 (GPSGGTGTAAGGGGN) are enriched in gly residues. Over residues 1149-1165 (PRDEPAPKRDQPQDKGK) the composition is skewed to basic and acidic residues.

It belongs to the eIF-3 subunit A family. Component of the eukaryotic translation initiation factor 3 (eIF-3) complex. The eIF-3 complex interacts with pix.

The protein localises to the cytoplasm. RNA-binding component of the eukaryotic translation initiation factor 3 (eIF-3) complex, which is involved in protein synthesis of a specialized repertoire of mRNAs and, together with other initiation factors, stimulates binding of mRNA and methionyl-tRNAi to the 40S ribosome. The eIF-3 complex specifically targets and initiates translation of a subset of mRNAs involved in cell proliferation. The sequence is that of Eukaryotic translation initiation factor 3 subunit A from Drosophila persimilis (Fruit fly).